Reading from the N-terminus, the 203-residue chain is QQNLPQRYIELVVVADRRVFMKYNSDLNIIRTRVHEIVNIINGFYRSLNIDVSLVNLEIWSGQDPLTIQSSSSNTLNSEGLWREKVLLNKKKKDNAQLLTAIEFKCETLGKAYLNSMCNPRSSVGIVKDHSPINLLVAVTMAHELGHNLGMEHDGKDCLRGASLCIMRPGLTPGRSYEFSDDSMGYYQKFLNQYKPQCILNKP.

Residues R7–P203 enclose the Peptidase M12B domain. Residues E10 and D94 each coordinate Ca(2+). 2 disulfides stabilise this stretch: C118–C198 and C158–C165. Zn(2+) is bound at residue H143. Residue E144 is part of the active site. 2 residues coordinate Zn(2+): H147 and H153. Ca(2+) is bound by residues C198 and N201.

This sequence belongs to the venom metalloproteinase (M12B) family. P-I subfamily. As to quaternary structure, monomer. The cofactor is Zn(2+). In terms of tissue distribution, expressed by the venom gland.

The protein resides in the secreted. The catalysed reaction is Cleavage of 1-Phe-|-Val-2, 5-His-|-Leu-6, 14-Ala-|-Leu-15, 15-Leu-|-Tyr-16, and 16-Tyr-|-Leu-17 of insulin B chain.. Has no significant hemorrhagic activity, but inactivates serpins by limited proteolysis of their reactive-site loops. The sequence is that of Snake venom metalloproteinase adamalysin-2 from Crotalus adamanteus (Eastern diamondback rattlesnake).